The following is a 100-amino-acid chain: Urease subunit gamma (100 aa).

This sequence belongs to the urease gamma subunit family. As to quaternary structure, heterotrimer of UreA (gamma), UreB (beta) and UreC (alpha) subunits. Three heterotrimers associate to form the active enzyme.

The protein resides in the cytoplasm. The enzyme catalyses urea + 2 H2O + H(+) = hydrogencarbonate + 2 NH4(+). It functions in the pathway nitrogen metabolism; urea degradation; CO(2) and NH(3) from urea (urease route): step 1/1. The chain is Urease subunit gamma from Corynebacterium efficiens (strain DSM 44549 / YS-314 / AJ 12310 / JCM 11189 / NBRC 100395).